Here is a 154-residue protein sequence, read N- to C-terminus: Large ribosomal subunit protein uL13 (154 aa).

Belongs to the universal ribosomal protein uL13 family. Part of the 50S ribosomal subunit.

This protein is one of the early assembly proteins of the 50S ribosomal subunit, although it is not seen to bind rRNA by itself. It is important during the early stages of 50S assembly. This chain is Large ribosomal subunit protein uL13, found in Brucella anthropi (strain ATCC 49188 / DSM 6882 / CCUG 24695 / JCM 21032 / LMG 3331 / NBRC 15819 / NCTC 12168 / Alc 37) (Ochrobactrum anthropi).